We begin with the raw amino-acid sequence, 300 residues long: Acetylglutamate kinase (300 aa).

Residues 68 to 69 (GG), Arg-90, and Asn-194 contribute to the substrate site.

The protein belongs to the acetylglutamate kinase family. ArgB subfamily.

It localises to the cytoplasm. It carries out the reaction N-acetyl-L-glutamate + ATP = N-acetyl-L-glutamyl 5-phosphate + ADP. The protein operates within amino-acid biosynthesis; L-arginine biosynthesis; N(2)-acetyl-L-ornithine from L-glutamate: step 2/4. Its function is as follows. Catalyzes the ATP-dependent phosphorylation of N-acetyl-L-glutamate. The chain is Acetylglutamate kinase from Methanocella arvoryzae (strain DSM 22066 / NBRC 105507 / MRE50).